The following is a 72-amino-acid chain: MAKDDVIQMQGEILENLPNATFRVKLENGHVVLGHISGKMRMNYIRILPGDKVTVELTPYDLSRARIVFRTK.

One can recognise an S1-like domain in the interval 1–72 (MAKDDVIQMQ…SRARIVFRTK (72 aa)).

It belongs to the IF-1 family. Component of the 30S ribosomal translation pre-initiation complex which assembles on the 30S ribosome in the order IF-2 and IF-3, IF-1 and N-formylmethionyl-tRNA(fMet); mRNA recruitment can occur at any time during PIC assembly.

Its subcellular location is the cytoplasm. One of the essential components for the initiation of protein synthesis. Stabilizes the binding of IF-2 and IF-3 on the 30S subunit to which N-formylmethionyl-tRNA(fMet) subsequently binds. Helps modulate mRNA selection, yielding the 30S pre-initiation complex (PIC). Upon addition of the 50S ribosomal subunit IF-1, IF-2 and IF-3 are released leaving the mature 70S translation initiation complex. This Herminiimonas arsenicoxydans protein is Translation initiation factor IF-1.